The sequence spans 130 residues: Phosphoribosyl-AMP cyclohydrolase (130 aa).

Mg(2+) is bound at residue aspartate 77. Residue cysteine 78 participates in Zn(2+) binding. Mg(2+)-binding residues include aspartate 79 and aspartate 81. Residues cysteine 95 and cysteine 102 each contribute to the Zn(2+) site.

Belongs to the PRA-CH family. In terms of assembly, homodimer. It depends on Mg(2+) as a cofactor. Zn(2+) is required as a cofactor.

The protein resides in the cytoplasm. It carries out the reaction 1-(5-phospho-beta-D-ribosyl)-5'-AMP + H2O = 1-(5-phospho-beta-D-ribosyl)-5-[(5-phospho-beta-D-ribosylamino)methylideneamino]imidazole-4-carboxamide. It functions in the pathway amino-acid biosynthesis; L-histidine biosynthesis; L-histidine from 5-phospho-alpha-D-ribose 1-diphosphate: step 3/9. Functionally, catalyzes the hydrolysis of the adenine ring of phosphoribosyl-AMP. The sequence is that of Phosphoribosyl-AMP cyclohydrolase from Pseudomonas entomophila (strain L48).